A 521-amino-acid chain; its full sequence is Lysine--tRNA ligase (521 aa).

The 'HIGH' region signature appears at 32 to 40 (PSGTVHIGN). Residues 280–284 (KISSS) carry the 'KMSKS' region motif.

It belongs to the class-I aminoacyl-tRNA synthetase family.

The protein localises to the cytoplasm. It carries out the reaction tRNA(Lys) + L-lysine + ATP = L-lysyl-tRNA(Lys) + AMP + diphosphate. This is Lysine--tRNA ligase (lysS) from Borreliella burgdorferi (strain ATCC 35210 / DSM 4680 / CIP 102532 / B31) (Borrelia burgdorferi).